Here is a 240-residue protein sequence, read N- to C-terminus: MFYSGLLTEGGRKETDMREAASLRQQRRMKQAVQFIHKDSADLLPLDGLKKLGSSKDTQPHNILQRRLMETNLSKLRSTRVPWASKTNKFNQAKSEGLKKCEDEDMILVSCQCAGKDVKALVDTGCQYNLISSACVDRLGLKDHVKSHKHEGEKLSLPRHLKVVGQIEHLMITVGSLRLDCQAAVVDDNEKSLSLGLQTLRSLKCIINLDKHRLIVGKTDKEEIPFVETVSVNDDNTSEA.

In Mus musculus (Mouse), this protein is Nuclear receptor-interacting protein 3 (Nrip3).